The sequence spans 139 residues: Ribulose bisphosphate carboxylase small subunit (139 aa).

Belongs to the RuBisCO small chain family. As to quaternary structure, heterohexadecamer of 8 large and 8 small subunits.

It localises to the plastid. The protein localises to the chloroplast. Functionally, ruBisCO catalyzes two reactions: the carboxylation of D-ribulose 1,5-bisphosphate, the primary event in carbon dioxide fixation, as well as the oxidative fragmentation of the pentose substrate in the photorespiration process. Both reactions occur simultaneously and in competition at the same active site. Although the small subunit is not catalytic it is essential for maximal activity. This Trieres chinensis (Marine centric diatom) protein is Ribulose bisphosphate carboxylase small subunit.